The following is a 207-amino-acid chain: Large ribosomal subunit protein uL4 (207 aa).

The segment at serine 48 to valine 89 is disordered. Basic residues predominate over residues glycine 60 to glycine 71.

It belongs to the universal ribosomal protein uL4 family. In terms of assembly, part of the 50S ribosomal subunit.

One of the primary rRNA binding proteins, this protein initially binds near the 5'-end of the 23S rRNA. It is important during the early stages of 50S assembly. It makes multiple contacts with different domains of the 23S rRNA in the assembled 50S subunit and ribosome. Its function is as follows. Forms part of the polypeptide exit tunnel. The polypeptide is Large ribosomal subunit protein uL4 (Bacillus velezensis (strain DSM 23117 / BGSC 10A6 / LMG 26770 / FZB42) (Bacillus amyloliquefaciens subsp. plantarum)).